The chain runs to 149 residues: Protegrin-4 (149 aa).

The N-terminal stretch at 1–29 (METQRASLCLGRWSLWLLLLALVVPSASA) is a signal peptide. A propeptide spanning residues 30-130 (QALSYREAVL…DITCNEVQGV (101 aa)) is cleaved from the precursor. The tract at residues 61 to 80 (DQPPKADEDPGTPKPVSFTV) is disordered. 4 cysteine pairs are disulfide-bonded: C85–C96, C107–C124, C136–C145, and C138–C143. R148 is modified (arginine amide).

It belongs to the cathelicidin family.

It localises to the secreted. Functionally, microbicidal activity. In Sus scrofa (Pig), this protein is Protegrin-4 (NPG4).